A 206-amino-acid chain; its full sequence is 3-demethoxyubiquinol 3-hydroxylase (206 aa).

Positions 55, 85, 88, 137, 169, and 172 each coordinate Fe cation.

Belongs to the COQ7 family. It depends on Fe cation as a cofactor.

Its subcellular location is the cell membrane. It catalyses the reaction a 5-methoxy-2-methyl-3-(all-trans-polyprenyl)benzene-1,4-diol + AH2 + O2 = a 3-demethylubiquinol + A + H2O. The protein operates within cofactor biosynthesis; ubiquinone biosynthesis. In terms of biological role, catalyzes the hydroxylation of 2-nonaprenyl-3-methyl-6-methoxy-1,4-benzoquinol during ubiquinone biosynthesis. The protein is 3-demethoxyubiquinol 3-hydroxylase of Azoarcus sp. (strain BH72).